Consider the following 295-residue polypeptide: Acetaldehyde dehydrogenase (295 aa).

Position 11-14 (11-14 (SGNI)) interacts with NAD(+). C127 acts as the Acyl-thioester intermediate in catalysis. Residues 158–166 (SAGPGTRAN) and N270 contribute to the NAD(+) site.

The protein belongs to the acetaldehyde dehydrogenase family.

The catalysed reaction is acetaldehyde + NAD(+) + CoA = acetyl-CoA + NADH + H(+). The chain is Acetaldehyde dehydrogenase (nbaJ) from Geobacillus thermodenitrificans (strain NG80-2).